The following is a 119-amino-acid chain: Ribonuclease pancreatic (119 aa).

Residue Gln-1 is modified to Pyrrolidone carboxylic acid. The active-site Proton acceptor is the His-10. 3 disulfide bridges follow: Cys-25–Cys-80, Cys-39–Cys-91, and Cys-57–Cys-106. 40 to 44 (KTRNT) is a substrate binding site. The active-site Proton donor is the His-113.

This sequence belongs to the pancreatic ribonuclease family. As to quaternary structure, monomer. Interacts with and forms tight 1:1 complexes with RNH1. Dimerization of two such complexes may occur. Interaction with RNH1 inhibits this protein. In terms of tissue distribution, pancreas.

Its subcellular location is the secreted. The catalysed reaction is an [RNA] containing cytidine + H2O = an [RNA]-3'-cytidine-3'-phosphate + a 5'-hydroxy-ribonucleotide-3'-[RNA].. It carries out the reaction an [RNA] containing uridine + H2O = an [RNA]-3'-uridine-3'-phosphate + a 5'-hydroxy-ribonucleotide-3'-[RNA].. Functionally, endonuclease that catalyzes the cleavage of RNA on the 3' side of pyrimidine nucleotides. Acts on single-stranded and double-stranded RNA. This chain is Ribonuclease pancreatic, found in Iguana iguana (Common iguana).